Consider the following 273-residue polypeptide: IMGHMVNAIEQVDEFLNLGANAIEFDIDFDKDGIAQITHHGIPCDCGRKCTKKAIFTEYLDNIRQVTTPDDPKFREQLVLLALDLKLQRISSAKAYRAGEDVAKKLLDHYWQRGNSRARAYILLNIPLVEDYEFIRAFKDTPKNEGYESYNDKVGINFTGNEDLDKIRDVLEILGIHKQVWQADGITSCLARGTERLKEALEKRDTPGYNYINKVYAWTLVRKSIMRRSLRLGVDGVMSNNPDRVIKVLKEKEFADKFRLATYNDNPWEKFRG.

The active site involves histidine 4. Mg(2+) contacts are provided by glutamate 24 and aspartate 26. Histidine 40 functions as the Nucleophile in the catalytic mechanism. Intrachain disulfides connect cysteine 44-cysteine 50 and cysteine 46-cysteine 189. Mg(2+) is bound at residue aspartate 84.

Belongs to the arthropod phospholipase D family. Class II subfamily. It depends on Mg(2+) as a cofactor. In terms of tissue distribution, expressed by the venom gland.

Its subcellular location is the secreted. It catalyses the reaction an N-(acyl)-sphingosylphosphocholine = an N-(acyl)-sphingosyl-1,3-cyclic phosphate + choline. It carries out the reaction an N-(acyl)-sphingosylphosphoethanolamine = an N-(acyl)-sphingosyl-1,3-cyclic phosphate + ethanolamine. The enzyme catalyses a 1-acyl-sn-glycero-3-phosphocholine = a 1-acyl-sn-glycero-2,3-cyclic phosphate + choline. The catalysed reaction is a 1-acyl-sn-glycero-3-phosphoethanolamine = a 1-acyl-sn-glycero-2,3-cyclic phosphate + ethanolamine. Its function is as follows. Dermonecrotic toxins cleave the phosphodiester linkage between the phosphate and headgroup of certain phospholipids (sphingolipid and lysolipid substrates), forming an alcohol (often choline) and a cyclic phosphate. This toxin acts on sphingomyelin (SM). It may also act on ceramide phosphoethanolamine (CPE), lysophosphatidylcholine (LPC) and lysophosphatidylethanolamine (LPE), but not on lysophosphatidylserine (LPS), and lysophosphatidylglycerol (LPG). It acts by transphosphatidylation, releasing exclusively cyclic phosphate products as second products. Induces dermonecrosis, hemolysis, increased vascular permeability, edema, inflammatory response, and platelet aggregation. In Sicarius cf. damarensis (strain GJB-2008) (Six-eyed sand spider), this protein is Dermonecrotic toxin SdSicTox-betaIIB1bxi.